The following is a 2296-amino-acid chain: Protein Ycf2 (2296 aa).

1650–1657 (GSIGIGRS) serves as a coordination point for ATP.

It belongs to the Ycf2 family.

Its subcellular location is the plastid. It is found in the chloroplast stroma. Probable ATPase of unknown function. Its presence in a non-photosynthetic plant (Epifagus virginiana) and experiments in tobacco indicate that it has an essential function which is probably not related to photosynthesis. The polypeptide is Protein Ycf2 (Arabis hirsuta (Hairy rock-cress)).